We begin with the raw amino-acid sequence, 521 residues long: Maturase K (521 aa).

It belongs to the intron maturase 2 family. MatK subfamily.

The protein localises to the plastid. It localises to the chloroplast. In terms of biological role, usually encoded in the trnK tRNA gene intron. Probably assists in splicing its own and other chloroplast group II introns. In Trillium catesbaei (Catesby's trillium), this protein is Maturase K.